A 145-amino-acid chain; its full sequence is Peptide methionine sulfoxide reductase MsrB (145 aa).

Residues 4–127 enclose the MsrB domain; sequence KEELRQRIGD…NSAALKFIPY (124 aa). Catalysis depends on Cys116, which acts as the Nucleophile.

The protein belongs to the MsrB Met sulfoxide reductase family.

The catalysed reaction is L-methionyl-[protein] + [thioredoxin]-disulfide + H2O = L-methionyl-(R)-S-oxide-[protein] + [thioredoxin]-dithiol. This is Peptide methionine sulfoxide reductase MsrB from Streptococcus equi subsp. zooepidemicus (strain H70).